The following is a 399-amino-acid chain: Homocysteine-responsive endoplasmic reticulum-resident ubiquitin-like domain member 2 protein (399 aa).

A Ubiquitin-like domain is found at 10–89 (VTLVIKAPNQ…HMVHLVCASR (80 aa)). Disordered stretches follow at residues 88–144 (SRTP…SIRH) and 211–250 (ASNQSPSNGENAQPVPRPVINSESPPPNPPRAPPNVAPEM). Residues 95-106 (PKASTSNKSMGT) are compositionally biased toward polar residues. The span at 107–124 (ASISRSSSEHSGSASPAS) shows a compositional bias: low complexity. Polar residues predominate over residues 211-221 (ASNQSPSNGEN). Over residues 234–246 (SPPPNPPRAPPNV) the composition is skewed to pro residues. The chain crosses the membrane as a helical span at residues 299–319 (FVMVMGAMILVYMHQAGWFPL).

The protein localises to the membrane. Functionally, could be involved in the unfolded protein response (UPR) pathway. This Xenopus tropicalis (Western clawed frog) protein is Homocysteine-responsive endoplasmic reticulum-resident ubiquitin-like domain member 2 protein (herpud2).